A 146-amino-acid chain; its full sequence is Hemoglobin subunit beta (146 aa).

Val-1 is subject to N-acetylvaline. One can recognise a Globin domain in the interval 2–146 (HLTDAEKAAV…VATALAHKYH (145 aa)). Ser-44 is subject to Phosphoserine. At Lys-59 the chain carries N6-acetyllysine. Heme b is bound at residue His-63. At Lys-82 the chain carries N6-acetyllysine. A heme b-binding site is contributed by His-92. Cys-93 is modified (S-nitrosocysteine). An N6-acetyllysine modification is found at Lys-144.

This sequence belongs to the globin family. In terms of assembly, heterotetramer of two alpha chains and two beta chains. As to expression, red blood cells.

Involved in oxygen transport from the lung to the various peripheral tissues. The protein is Hemoglobin subunit beta (HBB) of Spalax ehrenbergi (Middle East blind mole rat).